Here is a 209-residue protein sequence, read N- to C-terminus: Adenylate kinase (209 aa).

Residue 59 to 64 (GSGKRT) coordinates ATP. The segment at 79-108 (SSGQVLTRGVESGSETSQLAHSYVSRGERV) is NMP. Residues Ser-80, 106–108 (ERV), 135–138 (GYPR), and Gln-142 contribute to the AMP site. Residues 172–205 (HRRYDPATNKXYHMLDNPPPGGRCRVMRTAPAEG) form an LID region. Arg-173 is a binding site for ATP.

This sequence belongs to the adenylate kinase family. In terms of assembly, monomer.

It localises to the cytoplasm. It catalyses the reaction AMP + ATP = 2 ADP. Catalyzes the reversible transfer of the terminal phosphate group between ATP and AMP. Plays an important role in cellular energy homeostasis and in adenine nucleotide metabolism. The chain is Adenylate kinase from Trypanosoma brucei rhodesiense.